A 168-amino-acid chain; its full sequence is MEIGQYQPNLDGDGLRIGIVQARFNEPVCNGLADSCIEELERLGVTGEDVLLVTVPGALEIPLALQKLAESAQFDALIALGAVIRGETYHFELVSNESGAGITRIGLDFGIPVANAVLTTENDEQAVARMTEKGRDAARVAVEMANLAVALEQLGGDDDEEEDEEEEA.

Residues F24, 58–60, and 82–84 each bind 5-amino-6-(D-ribitylamino)uracil; these read ALE and AVI. Residue 87 to 88 participates in (2S)-2-hydroxy-3-oxobutyl phosphate binding; sequence ET. H90 functions as the Proton donor in the catalytic mechanism. N115 contributes to the 5-amino-6-(D-ribitylamino)uracil binding site. R129 serves as a coordination point for (2S)-2-hydroxy-3-oxobutyl phosphate.

It belongs to the DMRL synthase family.

It catalyses the reaction (2S)-2-hydroxy-3-oxobutyl phosphate + 5-amino-6-(D-ribitylamino)uracil = 6,7-dimethyl-8-(1-D-ribityl)lumazine + phosphate + 2 H2O + H(+). Its pathway is cofactor biosynthesis; riboflavin biosynthesis; riboflavin from 2-hydroxy-3-oxobutyl phosphate and 5-amino-6-(D-ribitylamino)uracil: step 1/2. Catalyzes the formation of 6,7-dimethyl-8-ribityllumazine by condensation of 5-amino-6-(D-ribitylamino)uracil with 3,4-dihydroxy-2-butanone 4-phosphate. This is the penultimate step in the biosynthesis of riboflavin. The polypeptide is 6,7-dimethyl-8-ribityllumazine synthase (Paraburkholderia xenovorans (strain LB400)).